The primary structure comprises 54 residues: Putative collagen-like domain-containing protein 065L (54 aa).

Positions 1-54 are disordered; the sequence is MRGLEAPGAVGPTGPSGAPGSQGPDGDVGGMGPEGPKGDDGPVGPKGPQGAAIF. The 45-residue stretch at 7 to 51 folds into the Collagen-like domain; it reads PGAVGPTGPSGAPGSQGPDGDVGGMGPEGPKGDDGPVGPKGPQGA. A compositionally biased stretch (gly residues) spans 26-35; sequence GDVGGMGPEG. The segment covering 42 to 54 has biased composition (low complexity); that stretch reads PVGPKGPQGAAIF.

The chain is Putative collagen-like domain-containing protein 065L from Dryophytes versicolor (chameleon treefrog).